Here is a 935-residue protein sequence, read N- to C-terminus: MSRSPSPDSPPAVRDDEEKDAREQSDSPTSNTDDPKSPSESPKSNRSQESSRKDSRESGKRRDSHEDEKMPLTPPNRSSEASPQHRRHRESRSPSRSRSRSHRSHSRSQYRRSRSRSRDRRSRSRSRDRRSHSRSRDRRSPARRRSPVRAKSPAQAVKPTEEPEKKKNDPKDLLRTRTGGAYIPPAKLRLMQQQITDKSSEQYQRMNWERMKKKIHGLVNRVNAKNLVQIVRELLQENVIRSKGLLCRDIIQAQAFSPGFSNVYAALAAVINSKFPHIGELLLRRLIVQFKRSFRRNDRGVTVNVIKFIAHLINQQVAHEVLALEIMILMLEEPTDDSVEVAIAFLKECGAKLMEIAPAALNSVYDRLRAILMETERSENALDRRIQYMIETAMQIRKDKFAAYPAVVEDLDLIEEEDQIIHTLNLEDAVDPENGLNVFKLDPEFEKNENVYEEIRKEIIGDADISSDEEEEVEDDDEESEAEEAPRKTTEIIDNTDQNLTAFRREVYLTLQSSLDYQEAAHKLLKMKIPDNLQVNVILKFIQKKSEFQNELCAMLVDCCAQQRTYERFYGMLIERFCRLRLEYQQCFEKLCQDTYATVHRIDITKLRNLARLVAHLLSTDAIEWKILADVKMTEEDTTSAGRIYIKFIFMELVEAMGMVKLHTRVTDPTLAHCFVGMFPRTDPQDARFAINFFTMIGLGGLTLELREWLNRGLKKKKGIIDELKAAQSSSDSSSDSSDSSDSSDSSGSSDSSDDSSSSSSSDSSKEPPKKKKKSGTVLKKKETDTNDHKEARGDSRAERRNDEEKLKRRSDEGRRDRSAENREPRRGRDRRDSGDDRHDRGRRDRSKEKEDRGDKRSQRHDSREEDRRERKDRDRRDRSEERDNRRDRKERSRSRDRRDHRDRSRSRERNEKRRHDDDRRREEKVGSDDRRRRH.

Residues 1 to 179 (MSRSPSPDSP…PKDLLRTRTG (179 aa)) form a disordered region. 2 stretches are compositionally biased toward basic and acidic residues: residues 13-25 (VRDD…REQS) and 49-70 (ESSR…DEKM). Residues 84–148 (QHRRHRESRS…RSPARRRSPV (65 aa)) show a composition bias toward basic residues. The segment covering 159–175 (PTEEPEKKKNDPKDLLR) has biased composition (basic and acidic residues). One can recognise an MIF4G domain in the interval 212 to 400 (KKKIHGLVNR…ETAMQIRKDK (189 aa)). A disordered region spans residues 463-489 (ADISSDEEEEVEDDDEESEAEEAPRKT). The span at 465 to 483 (ISSDEEEEVEDDDEESEAE) shows a compositional bias: acidic residues. The MI domain occupies 502 to 633 (AFRREVYLTL…EWKILADVKM (132 aa)). Residues 725-935 (KAAQSSSDSS…VGSDDRRRRH (211 aa)) form a disordered region. Residues 729–763 (SSSDSSSDSSDSSDSSDSSGSSDSSDDSSSSSSSD) are compositionally biased toward low complexity. 2 stretches are compositionally biased toward basic and acidic residues: residues 780 to 891 (KKKE…DRKE) and 897 to 935 (DRRD…RRRH).

The protein belongs to the CWC22 family.

It localises to the nucleus. It is found in the nucleus speckle. Its function is as follows. Required for early embryogenesis and tissue differentiation. Required for pre-mRNA splicing and for exon-junction complex (EJC) assembly. Hinders EIF4A3 from non-specifically binding RNA and escorts it to the splicing machinery to promote EJC assembly on mature mRNAs. Through its role in EJC assembly, required for nonsense-mediated mRNA decay. The chain is Pre-mRNA-splicing factor CWC22 homolog from Caenorhabditis briggsae.